We begin with the raw amino-acid sequence, 169 residues long: Photosystem I assembly protein Ycf3 (169 aa).

TPR repeat units lie at residues 36–69, 73–106, and 121–154; these read AFTYYRDGMSAQSEGNYAEALQNYYEAMRLEIDP, SYILYNIGLIHTRNGEHTKALEYYFRALERNPFL, and GEQAIRQGDSEIAEAWFNQAAEYWKQAIALTPGN.

The protein belongs to the Ycf3 family.

Its subcellular location is the plastid. It localises to the chloroplast thylakoid membrane. Its function is as follows. Essential for the assembly of the photosystem I (PSI) complex. May act as a chaperone-like factor to guide the assembly of the PSI subunits. This Cucumis sativus (Cucumber) protein is Photosystem I assembly protein Ycf3.